The following is a 324-amino-acid chain: Zinc transporter ZIP1 (324 aa).

Residues 1-30 (MGPWGEPELLVWRPEAAASEAPVPMGLEVK) are Extracellular-facing. Residues 31 to 51 (LGALVLLLVLTLICSLVPVCV) traverse the membrane as a helical segment. The Cytoplasmic segment spans residues 52 to 68 (LRRPGANPEASASRQKA). The helical transmembrane segment at 69–89 (LSLVSCFAGGVFLATCLLDLL) threads the bilayer. The Extracellular portion of the chain corresponds to 90-104 (PDYLGAIDEALAALH). A helical membrane pass occupies residues 105-125 (VTLQFPLQEFILAMGFFLVLV). The Cytoplasmic segment spans residues 126-179 (MEQITLAYKEQSGPPPREETRALLGTVNGGPQHWHDGLGVPQAGGASSAPSALR). A helical membrane pass occupies residues 180-200 (ACVLVFSLALHSVFEGLAVGL). Over 201–206 (QRDQAR) the chain is Extracellular. The helical transmembrane segment at 207–227 (AMELCLALLLHKGILAVSLSL) threads the bilayer. Over 228-237 (RLLQSHLRAQ) the chain is Cytoplasmic. A helical membrane pass occupies residues 238-258 (VVAGCGILFSCMTPLGIGLGT). Residues 259 to 272 (ALAESAGPLHQLAQ) lie on the Extracellular side of the membrane. The helical transmembrane segment at 273-293 (SVLEGMAAGTFLYITFLEILP) threads the bilayer. Topologically, residues 294 to 303 (QELATSEQRI) are cytoplasmic. Residues 304–324 (LKVILLLAGFALLTGLLFIQI) form a helical membrane-spanning segment.

It belongs to the ZIP transporter (TC 2.A.5) family.

The protein localises to the cell membrane. It is found in the endoplasmic reticulum membrane. It catalyses the reaction Zn(2+)(in) = Zn(2+)(out). Functionally, transporter for the divalent cation Zn(2+). Mediates the influx of Zn(2+) into cells from extracellular space. The polypeptide is Zinc transporter ZIP1 (SLC39A1) (Bos taurus (Bovine)).